Here is a 459-residue protein sequence, read N- to C-terminus: tRNA modification GTPase MnmE (459 aa).

The (6S)-5-formyl-5,6,7,8-tetrahydrofolate site is built by Arg23, Glu86, and Arg125. The region spanning 221–380 is the TrmE-type G domain; it reads GIDAVIIGKP…LENAITELFV (160 aa). Asn231 provides a ligand contact to K(+). GTP contacts are provided by residues 231 to 236, 250 to 256, and 275 to 278; these read NVGKSS, TDIPGTT, and DTAG. Position 235 (Ser235) interacts with Mg(2+). Residues Thr250, Ile252, and Thr255 each coordinate K(+). Thr256 contributes to the Mg(2+) binding site. Lys459 serves as a coordination point for (6S)-5-formyl-5,6,7,8-tetrahydrofolate.

The protein belongs to the TRAFAC class TrmE-Era-EngA-EngB-Septin-like GTPase superfamily. TrmE GTPase family. As to quaternary structure, homodimer. Heterotetramer of two MnmE and two MnmG subunits. K(+) serves as cofactor.

It is found in the cytoplasm. Exhibits a very high intrinsic GTPase hydrolysis rate. Involved in the addition of a carboxymethylaminomethyl (cmnm) group at the wobble position (U34) of certain tRNAs, forming tRNA-cmnm(5)s(2)U34. The sequence is that of tRNA modification GTPase MnmE from Acetivibrio thermocellus (strain ATCC 27405 / DSM 1237 / JCM 9322 / NBRC 103400 / NCIMB 10682 / NRRL B-4536 / VPI 7372) (Clostridium thermocellum).